The following is a 155-amino-acid chain: Putative pre-16S rRNA nuclease (155 aa).

Belongs to the YqgF nuclease family.

It is found in the cytoplasm. Its function is as follows. Could be a nuclease involved in processing of the 5'-end of pre-16S rRNA. The polypeptide is Putative pre-16S rRNA nuclease (Wolbachia sp. subsp. Brugia malayi (strain TRS)).